Consider the following 159-residue polypeptide: Phosphopantetheine adenylyltransferase (159 aa).

Thr-10 provides a ligand contact to substrate. ATP is bound by residues 10–11 (TF) and His-18. Residues Lys-42, Met-74, and Arg-88 each coordinate substrate. ATP-binding positions include 89–91 (GLR), Glu-99, and 124–130 (WSFISSS).

It belongs to the bacterial CoaD family. Homohexamer. Mg(2+) serves as cofactor.

It localises to the cytoplasm. The catalysed reaction is (R)-4'-phosphopantetheine + ATP + H(+) = 3'-dephospho-CoA + diphosphate. Its pathway is cofactor biosynthesis; coenzyme A biosynthesis; CoA from (R)-pantothenate: step 4/5. Its function is as follows. Reversibly transfers an adenylyl group from ATP to 4'-phosphopantetheine, yielding dephospho-CoA (dPCoA) and pyrophosphate. This is Phosphopantetheine adenylyltransferase from Enterobacter sp. (strain 638).